A 370-amino-acid polypeptide reads, in one-letter code: Holliday junction branch migration complex subunit RuvB (370 aa).

The large ATPase domain (RuvB-L) stretch occupies residues 1-182 (MDERMMTSAK…FGVIHRLEYY (182 aa)). ATP is bound by residues Leu21, Arg22, Gly63, Lys66, Thr67, Thr68, 129 to 131 (EDF), Arg172, Tyr182, and Arg219. Thr67 contacts Mg(2+). The interval 183 to 253 (RPDELEFIIL…VAREALRRLE (71 aa)) is small ATPAse domain (RuvB-S). Residues 256–370 (PRGLDTTDQR…AEQAALSFDE (115 aa)) form a head domain (RuvB-H) region. Residues Arg311 and Arg316 each coordinate DNA.

The protein belongs to the RuvB family. Homohexamer. Forms an RuvA(8)-RuvB(12)-Holliday junction (HJ) complex. HJ DNA is sandwiched between 2 RuvA tetramers; dsDNA enters through RuvA and exits via RuvB. An RuvB hexamer assembles on each DNA strand where it exits the tetramer. Each RuvB hexamer is contacted by two RuvA subunits (via domain III) on 2 adjacent RuvB subunits; this complex drives branch migration. In the full resolvosome a probable DNA-RuvA(4)-RuvB(12)-RuvC(2) complex forms which resolves the HJ.

It is found in the cytoplasm. The catalysed reaction is ATP + H2O = ADP + phosphate + H(+). Its function is as follows. The RuvA-RuvB-RuvC complex processes Holliday junction (HJ) DNA during genetic recombination and DNA repair, while the RuvA-RuvB complex plays an important role in the rescue of blocked DNA replication forks via replication fork reversal (RFR). RuvA specifically binds to HJ cruciform DNA, conferring on it an open structure. The RuvB hexamer acts as an ATP-dependent pump, pulling dsDNA into and through the RuvAB complex. RuvB forms 2 homohexamers on either side of HJ DNA bound by 1 or 2 RuvA tetramers; 4 subunits per hexamer contact DNA at a time. Coordinated motions by a converter formed by DNA-disengaged RuvB subunits stimulates ATP hydrolysis and nucleotide exchange. Immobilization of the converter enables RuvB to convert the ATP-contained energy into a lever motion, pulling 2 nucleotides of DNA out of the RuvA tetramer per ATP hydrolyzed, thus driving DNA branch migration. The RuvB motors rotate together with the DNA substrate, which together with the progressing nucleotide cycle form the mechanistic basis for DNA recombination by continuous HJ branch migration. Branch migration allows RuvC to scan DNA until it finds its consensus sequence, where it cleaves and resolves cruciform DNA. The polypeptide is Holliday junction branch migration complex subunit RuvB (Heliobacterium modesticaldum (strain ATCC 51547 / Ice1)).